The following is a 466-amino-acid chain: Reticulophagy regulator 3 (466 aa).

Residues 1-80 are Cytoplasmic-facing; it reads MEEAEGVAAA…WCLGLNAAFW (80 aa). S26 carries the post-translational modification Phosphoserine. Residues 81-101 form a helical membrane-spanning segment; it reads FFALTSLRFVFLLAFSLMIIV. The Lumenal portion of the chain corresponds to 102–168; that stretch reads CIDQWKNKIW…LLFKKQNPGK (67 aa). The chain crosses the membrane as a helical span at residues 169–187; the sequence is FCLLSCGVLTFLAMLGRYI. The Cytoplasmic portion of the chain corresponds to 188-192; it reads PGLLL. The helical transmembrane segment at 193-211 threads the bilayer; that stretch reads SYLMLVIIMMWPLAVYHRL. Topologically, residues 212–381 are lumenal; the sequence is WDRAYVRLKP…ASRNEAALPE (170 aa). The disordered stretch occupies residues 244–263; that stretch reads RRRALHSERATDSHSDSEEE. Residues 248-259 are compositionally biased toward basic and acidic residues; sequence LHSERATDSHSD. T254 carries the phosphothreonine modification. A phosphoserine mark is found at S258 and S260. T283 bears the Phosphothreonine mark. S285, S288, S293, and S303 each carry phosphoserine. Residues 285-335 are disordered; sequence SEHSDAEVSCTENGTFNLSRGQTPLTEGSEDLDGHSDPEESFARDLPDFPS. A compositionally biased stretch (polar residues) spans 294–310; it reads CTENGTFNLSRGQTPLT. 2 positions are modified to phosphothreonine: T307 and T310. 3 positions are modified to phosphoserine: S313, S320, and S360. Over residues 316–331 the composition is skewed to basic and acidic residues; that stretch reads LDGHSDPEESFARDLP. Residues 382–401 traverse the membrane as a helical segment; sequence LLLSSLPGGSNLTSNLASLV. Over 402-466 the chain is Cytoplasmic; sequence SQGMIQLALS…QLDPASSRSH (65 aa). The segment at 412–444 is disordered; it reads EASQTDPSGPPPRRATRGFLRAPSSDLDTDAEG. Position 440 is a phosphothreonine (T440). The short motif at 445-450 is the LIR motif element; the sequence is DDFELL.

This sequence belongs to the RETREG family. Interacts with ATG8 family modifier proteins MAP1LC3A, MAP1LC3B, GABARAPL1 and GABARAPL2. Also interacts with ATG8 family modifier protein GABARAP. Interacts with CANX. Interacts with RTN4 isoform B. In terms of tissue distribution, widely expressed with highest levels in brain, lung, liver, muscle and spleen (protein level). Mainly expressed in the central nervous system and in parenchymatous organs including liver, lung and kidney.

It localises to the endoplasmic reticulum membrane. Endoplasmic reticulum (ER)-anchored autophagy regulator which exists in an inactive state under basal conditions but is activated following cellular stress. When activated, induces ER fragmentation and mediates ER delivery into lysosomes through sequestration into autophagosomes via interaction with ATG8 family proteins. Promotes ER membrane curvature and ER tubulation required for subsequent ER fragmentation and engulfment into autophagosomes. Required for collagen quality control in a LIR motif-dependent manner. Mediates NRF1-enhanced neurite outgrowth. The chain is Reticulophagy regulator 3 (Retreg3) from Mus musculus (Mouse).